A 335-amino-acid polypeptide reads, in one-letter code: Ornithine carbamoyltransferase (335 aa).

Residues 60–63 (STRT), Gln87, Arg111, and 138–141 (HPTQ) contribute to the carbamoyl phosphate site. L-ornithine-binding positions include Asn171, Asp235, and 239–240 (SM). Carbamoyl phosphate-binding positions include 277–278 (CL) and Arg322.

It belongs to the aspartate/ornithine carbamoyltransferase superfamily. OTCase family.

The protein localises to the cytoplasm. It carries out the reaction carbamoyl phosphate + L-ornithine = L-citrulline + phosphate + H(+). The protein operates within amino-acid biosynthesis; L-arginine biosynthesis; L-arginine from L-ornithine and carbamoyl phosphate: step 1/3. Its function is as follows. Reversibly catalyzes the transfer of the carbamoyl group from carbamoyl phosphate (CP) to the N(epsilon) atom of ornithine (ORN) to produce L-citrulline. The sequence is that of Ornithine carbamoyltransferase from Streptomyces avermitilis (strain ATCC 31267 / DSM 46492 / JCM 5070 / NBRC 14893 / NCIMB 12804 / NRRL 8165 / MA-4680).